The sequence spans 300 residues: MATKAAFAKMNGLGNQIIVADMRGRADRITPEAAIRLAGDSETAFDQIMAIHDPRTAGTDNYIAIINCDGTEAQACGNGTRCVVQALAAETGRQAFTFETRAGILTATEHEDGLISVDMGKPRFDWQDIPLAEEFRDTRMIELQVGPIDAPVLHSPSVASMGNPHAIFWVDRDVWSYELEKFGPLLEHHPIFPERANISIAHVTSPETIDLRTWERGAGLTRACGSAACAAAVSAVRTRRTGRTVTVNVPGGPLRIEWRDDDHVMMTGPAEWEFSGTFDPATGEWSRDAQNDKPTDRGAA.

Substrate contacts are provided by Asn-15, Gln-47, and Asn-67. Residue Cys-76 is the Proton donor of the active site. Residues 77 to 78, Asn-163, Asn-197, and 215 to 216 contribute to the substrate site; these read GN and ER. Catalysis depends on Cys-224, which acts as the Proton acceptor. 225 to 226 serves as a coordination point for substrate; the sequence is GS. The disordered stretch occupies residues 275–300; the sequence is SGTFDPATGEWSRDAQNDKPTDRGAA. Basic and acidic residues predominate over residues 285 to 300; it reads WSRDAQNDKPTDRGAA.

The protein belongs to the diaminopimelate epimerase family. Homodimer.

Its subcellular location is the cytoplasm. The enzyme catalyses (2S,6S)-2,6-diaminopimelate = meso-2,6-diaminopimelate. It functions in the pathway amino-acid biosynthesis; L-lysine biosynthesis via DAP pathway; DL-2,6-diaminopimelate from LL-2,6-diaminopimelate: step 1/1. Functionally, catalyzes the stereoinversion of LL-2,6-diaminopimelate (L,L-DAP) to meso-diaminopimelate (meso-DAP), a precursor of L-lysine and an essential component of the bacterial peptidoglycan. This chain is Diaminopimelate epimerase, found in Brucella anthropi (strain ATCC 49188 / DSM 6882 / CCUG 24695 / JCM 21032 / LMG 3331 / NBRC 15819 / NCTC 12168 / Alc 37) (Ochrobactrum anthropi).